We begin with the raw amino-acid sequence, 304 residues long: Phosphoribosylaminoimidazole-succinocarboxamide synthase (304 aa).

Belongs to the SAICAR synthetase family.

It carries out the reaction 5-amino-1-(5-phospho-D-ribosyl)imidazole-4-carboxylate + L-aspartate + ATP = (2S)-2-[5-amino-1-(5-phospho-beta-D-ribosyl)imidazole-4-carboxamido]succinate + ADP + phosphate + 2 H(+). Its pathway is purine metabolism; IMP biosynthesis via de novo pathway; 5-amino-1-(5-phospho-D-ribosyl)imidazole-4-carboxamide from 5-amino-1-(5-phospho-D-ribosyl)imidazole-4-carboxylate: step 1/2. The polypeptide is Phosphoribosylaminoimidazole-succinocarboxamide synthase (Corynebacterium efficiens (strain DSM 44549 / YS-314 / AJ 12310 / JCM 11189 / NBRC 100395)).